Reading from the N-terminus, the 719-residue chain is Phosphoribosylformylglycinamidine synthase subunit PurL (719 aa).

His47 is an active-site residue. 2 residues coordinate ATP: Tyr50 and Lys89. A Mg(2+)-binding site is contributed by Glu91. Residues 92 to 95 (SHNH) and Arg114 contribute to the substrate site. His93 (proton acceptor) is an active-site residue. Asp115 lines the Mg(2+) pocket. Gln238 serves as a coordination point for substrate. Asp266 provides a ligand contact to Mg(2+). 310–312 (ESQ) is a substrate binding site. Asp488 and Gly525 together coordinate ATP. Mg(2+) is bound at residue Asn526. A substrate-binding site is contributed by Ser528.

It belongs to the FGAMS family. As to quaternary structure, monomer. Part of the FGAM synthase complex composed of 1 PurL, 1 PurQ and 2 PurS subunits.

It is found in the cytoplasm. It carries out the reaction N(2)-formyl-N(1)-(5-phospho-beta-D-ribosyl)glycinamide + L-glutamine + ATP + H2O = 2-formamido-N(1)-(5-O-phospho-beta-D-ribosyl)acetamidine + L-glutamate + ADP + phosphate + H(+). Its pathway is purine metabolism; IMP biosynthesis via de novo pathway; 5-amino-1-(5-phospho-D-ribosyl)imidazole from N(2)-formyl-N(1)-(5-phospho-D-ribosyl)glycinamide: step 1/2. Part of the phosphoribosylformylglycinamidine synthase complex involved in the purines biosynthetic pathway. Catalyzes the ATP-dependent conversion of formylglycinamide ribonucleotide (FGAR) and glutamine to yield formylglycinamidine ribonucleotide (FGAM) and glutamate. The FGAM synthase complex is composed of three subunits. PurQ produces an ammonia molecule by converting glutamine to glutamate. PurL transfers the ammonia molecule to FGAR to form FGAM in an ATP-dependent manner. PurS interacts with PurQ and PurL and is thought to assist in the transfer of the ammonia molecule from PurQ to PurL. This chain is Phosphoribosylformylglycinamidine synthase subunit PurL, found in Ruegeria pomeroyi (strain ATCC 700808 / DSM 15171 / DSS-3) (Silicibacter pomeroyi).